A 136-amino-acid chain; its full sequence is 1,4-dihydroxy-2-naphthoyl-CoA hydrolase (136 aa).

Aspartate 16 is a catalytic residue.

It belongs to the 4-hydroxybenzoyl-CoA thioesterase family. DHNA-CoA hydrolase subfamily.

It carries out the reaction 1,4-dihydroxy-2-naphthoyl-CoA + H2O = 1,4-dihydroxy-2-naphthoate + CoA + H(+). Its pathway is cofactor biosynthesis; phylloquinone biosynthesis. It functions in the pathway quinol/quinone metabolism; 1,4-dihydroxy-2-naphthoate biosynthesis; 1,4-dihydroxy-2-naphthoate from chorismate: step 7/7. In terms of biological role, catalyzes the hydrolysis of 1,4-dihydroxy-2-naphthoyl-CoA (DHNA-CoA) to 1,4-dihydroxy-2-naphthoate (DHNA), a reaction involved in phylloquinone (vitamin K1) biosynthesis. The sequence is that of 1,4-dihydroxy-2-naphthoyl-CoA hydrolase from Synechococcus sp. (strain ATCC 27144 / PCC 6301 / SAUG 1402/1) (Anacystis nidulans).